Consider the following 598-residue polypeptide: NADH-ubiquinone oxidoreductase chain 5 (598 aa).

Transmembrane regions (helical) follow at residues 6-26 (LTLIMNSGALLTIIVLLPPII), 32-52 (MILTTKLVKISMFISLIPLTI), 84-100 (YTVIFTPIALMITWSIM), 113-133 (MDKFFKYLLLFLITMITFISA), 136-156 (LLQLFIGWEGVGIMSFLLISW), 241-261 (TPVSALLHSSTMVVAGVFLLI), 272-292 (LMLEMTLCLGAMTTICAALCA), 301-320 (IIAFSTSSQLGLMMVAVGLN), 325-347 (AFLHMCTHAFFKAMLFLCSGSII), 370-390 (TTCMTIGSAALMGLPFLAGFF), 409-429 (LMVTLMAVTLTTAYSSRLIIM), 456-476 (LAWGSLISGLILTSTLPPMKP), 478-498 (IFTMPTYIKTIALMMFIISLI), and 576-596 (LNSATLPLMAFALTLITLSLT).

Belongs to the complex I subunit 5 family.

It is found in the mitochondrion inner membrane. The catalysed reaction is a ubiquinone + NADH + 5 H(+)(in) = a ubiquinol + NAD(+) + 4 H(+)(out). In terms of biological role, core subunit of the mitochondrial membrane respiratory chain NADH dehydrogenase (Complex I) that is believed to belong to the minimal assembly required for catalysis. Complex I functions in the transfer of electrons from NADH to the respiratory chain. The immediate electron acceptor for the enzyme is believed to be ubiquinone. This Petromyzon marinus (Sea lamprey) protein is NADH-ubiquinone oxidoreductase chain 5 (MT-ND5).